A 357-amino-acid chain; its full sequence is Ferrochelatase (357 aa).

Residues His193 and Glu272 each contribute to the Fe cation site.

This sequence belongs to the ferrochelatase family.

It is found in the cytoplasm. The enzyme catalyses heme b + 2 H(+) = protoporphyrin IX + Fe(2+). Its pathway is porphyrin-containing compound metabolism; protoheme biosynthesis; protoheme from protoporphyrin-IX: step 1/1. Functionally, catalyzes the ferrous insertion into protoporphyrin IX. In Hyphomonas neptunium (strain ATCC 15444), this protein is Ferrochelatase.